We begin with the raw amino-acid sequence, 469 residues long: TKASVGFKAGVKDYKLTYYTPDYVTKDTDILAAFRVTPQPGVPPEEAGAAVAAESSTGTWTTVWTDGLTSLDRYKGRCYNIEPVAGEEHQYICYVAYPLDLFEEGSVTNMFTSIVGNVFGFKALRALRLEDLRIPPAYSKTFQGPPHGIQVERDKLNKYGRPLLGCTIKPKLGLSAKNYGRAVYECLRGGLDFTKDDENVNSQPFMRWRDRFLFCAERIYKSQAETGEIKGHYLNATAGTCEEMIKRAVFARELGVPIVMHDYLTGGFTANTSLAHYCRDNGLLLHIHRAMHAVIDRQKNHGIHFRVLAKALRMSGGDHIHAGTVVGKLEGERDITLGFVDLLRDDFIEKDRSRGIYFTQDWVSLPGVLPVASGGIHVWHMPALTEIFGDDSVLQFGGGTLGHPWGNAPGAVANRVALEACVQARNEGRDLAREGNEIIREASKWSPELAAACEVWKAIKFEFPAMDTL.

Lys-8 is modified (N6,N6,N6-trimethyllysine). Positions 117 and 167 each coordinate substrate. Lys-169 serves as the catalytic Proton acceptor. Lys-171 contacts substrate. Residues Lys-195, Asp-197, and Glu-198 each coordinate Mg(2+). Lys-195 carries the N6-carboxylysine modification. The Proton acceptor role is filled by His-288. Substrate contacts are provided by Arg-289, His-321, and Ser-373.

This sequence belongs to the RuBisCO large chain family. Type I subfamily. Heterohexadecamer of 8 large chains and 8 small chains; disulfide-linked. The disulfide link is formed within the large subunit homodimers. Requires Mg(2+) as cofactor. The disulfide bond which can form in the large chain dimeric partners within the hexadecamer appears to be associated with oxidative stress and protein turnover.

It localises to the plastid. It is found in the chloroplast. The catalysed reaction is 2 (2R)-3-phosphoglycerate + 2 H(+) = D-ribulose 1,5-bisphosphate + CO2 + H2O. It carries out the reaction D-ribulose 1,5-bisphosphate + O2 = 2-phosphoglycolate + (2R)-3-phosphoglycerate + 2 H(+). RuBisCO catalyzes two reactions: the carboxylation of D-ribulose 1,5-bisphosphate, the primary event in carbon dioxide fixation, as well as the oxidative fragmentation of the pentose substrate in the photorespiration process. Both reactions occur simultaneously and in competition at the same active site. This is Ribulose bisphosphate carboxylase large chain from Coleonema pulchellum (Confetti bush).